Here is a 147-residue protein sequence, read N- to C-terminus: Ribosome maturation factor RimP (147 aa).

The protein belongs to the RimP family.

The protein resides in the cytoplasm. In terms of biological role, required for maturation of 30S ribosomal subunits. The protein is Ribosome maturation factor RimP of Sulfurihydrogenibium sp. (strain YO3AOP1).